We begin with the raw amino-acid sequence, 131 residues long: Small ribosomal subunit protein bS6 (131 aa).

The interval 100–131 is disordered; sequence SPMVKAKDERRSRDYSLEDANMDAEEAGDSEE. Over residues 104 to 115 the composition is skewed to basic and acidic residues; sequence KAKDERRSRDYS. Positions 119 to 131 are enriched in acidic residues; the sequence is ANMDAEEAGDSEE.

This sequence belongs to the bacterial ribosomal protein bS6 family.

Functionally, binds together with bS18 to 16S ribosomal RNA. This is Small ribosomal subunit protein bS6 from Photorhabdus laumondii subsp. laumondii (strain DSM 15139 / CIP 105565 / TT01) (Photorhabdus luminescens subsp. laumondii).